Consider the following 102-residue polypeptide: Large ribosomal subunit protein bL21 (102 aa).

The protein belongs to the bacterial ribosomal protein bL21 family. As to quaternary structure, part of the 50S ribosomal subunit. Contacts protein L20.

Functionally, this protein binds to 23S rRNA in the presence of protein L20. The polypeptide is Large ribosomal subunit protein bL21 (Sorangium cellulosum (strain So ce56) (Polyangium cellulosum (strain So ce56))).